Consider the following 343-residue polypeptide: Phospholipid phosphatase-related protein type 2 (343 aa).

Helical transmembrane passes span 12 to 32 (FSII…VVLL), 72 to 92 (ALIY…GELA), and 129 to 149 (FLGV…AGQV). An N-linked (GlcNAc...) asparagine glycan is attached at Asn-165. Helical transmembrane passes span 210 to 230 (AALC…VFRV), 239 to 259 (SLCL…VAEY), and 266 to 286 (VLAG…CVVH). The disordered stretch occupies residues 291 to 343 (RPHSGRRLSPWEDLSQAPTMDSPLEKNPRPAGRIRHRHGSPHPSRRTVPAVAT). 2 positions are modified to phosphoserine: Ser-299 and Ser-312. The span at 322 to 335 (GRIRHRHGSPHPSR) shows a compositional bias: basic residues.

The protein belongs to the PA-phosphatase related phosphoesterase family.

The protein resides in the membrane. The sequence is that of Phospholipid phosphatase-related protein type 2 from Mus musculus (Mouse).